A 174-amino-acid chain; its full sequence is Adenine phosphoribosyltransferase (174 aa).

It belongs to the purine/pyrimidine phosphoribosyltransferase family. In terms of assembly, homodimer.

The protein resides in the cytoplasm. It catalyses the reaction AMP + diphosphate = 5-phospho-alpha-D-ribose 1-diphosphate + adenine. It participates in purine metabolism; AMP biosynthesis via salvage pathway; AMP from adenine: step 1/1. Its function is as follows. Catalyzes a salvage reaction resulting in the formation of AMP, that is energically less costly than de novo synthesis. In Mycobacterium sp. (strain JLS), this protein is Adenine phosphoribosyltransferase.